The primary structure comprises 723 residues: Multiple organellar RNA editing factor 4, mitochondrial (723 aa).

Residues 1–64 constitute a mitochondrion transit peptide; sequence MAMFSHRLRR…RLFSTTQYQY (64 aa). 3 disordered regions span residues 180–303, 318–474, and 663–723; these read ITPG…GQTQ, RQEM…EGQP, and QNGG…NSRI. Positions 191–204 are enriched in basic and acidic residues; sequence EGFDSLKKESKPEQ. Composition is skewed to polar residues over residues 219 to 233, 273 to 303, 327 to 365, and 373 to 430; these read TSGQVQGQGSLTLPD, GQWQSRGQGNSFQGSFKQSQGTLPVRKGQTQ, GQAQRSQMPSSQGTLRQGQAQGSQRPSNQVGYNQGQGAQ, and QGAQ…NYSP. Low complexity-rich tracts occupy residues 459 to 474 and 682 to 695; these read QGQGTPLPGQGQEGQP and QGFSGQGQNQTFQQ. A compositionally biased stretch (basic and acidic residues) spans 714–723; that stretch reads TETRKPNSRI.

It belongs to the MORF family. In terms of assembly, heterodimers with MORF8/RIP1, MORF1/RIP8 and MORF3/RIP3.

The protein localises to the mitochondrion. Involved in organellar RNA editing. Required for the processing of few RNA editing site in mitochondria. The protein is Multiple organellar RNA editing factor 4, mitochondrial of Arabidopsis thaliana (Mouse-ear cress).